The sequence spans 471 residues: Heat shock 70 kDa protein 13 (471 aa).

Positions M1–A22 are cleaved as a signal peptide. The segment covering E315 to V341 has biased composition (basic and acidic residues). Positions E315 to K352 are disordered.

The protein belongs to the heat shock protein 70 family. Binds UBQLN2. In terms of tissue distribution, constitutively expressed in all tissues.

The protein resides in the microsome. Its subcellular location is the endoplasmic reticulum. Has peptide-independent ATPase activity. The polypeptide is Heat shock 70 kDa protein 13 (HSPA13) (Homo sapiens (Human)).